A 145-amino-acid chain; its full sequence is FAD synthase (145 aa).

ATP is bound by residues 9-10, 14-17, Asp-94, and Tyr-122; these read TF and HPGH.

Belongs to the archaeal FAD synthase family. Homodimer. A divalent metal cation is required as a cofactor.

The catalysed reaction is FMN + ATP + H(+) = FAD + diphosphate. It participates in cofactor biosynthesis; FAD biosynthesis; FAD from FMN: step 1/1. Catalyzes the transfer of the AMP portion of ATP to flavin mononucleotide (FMN) to produce flavin adenine dinucleotide (FAD) coenzyme. The sequence is that of FAD synthase from Methanocaldococcus infernus (strain DSM 11812 / JCM 15783 / ME).